Here is a 59-residue protein sequence, read N- to C-terminus: Sec-independent protein translocase protein TatA (59 aa).

A helical membrane pass occupies residues 1-21 (MFSNIGFPGLILILVAVLILF).

The protein belongs to the TatA/E family. Forms a complex with TatC.

Its subcellular location is the cell membrane. In terms of biological role, part of the twin-arginine translocation (Tat) system that transports large folded proteins containing a characteristic twin-arginine motif in their signal peptide across membranes. TatA could form the protein-conducting channel of the Tat system. The polypeptide is Sec-independent protein translocase protein TatA (Bacillus mycoides (strain KBAB4) (Bacillus weihenstephanensis)).